Here is a 168-residue protein sequence, read N- to C-terminus: MLAMMLNTTLSACFLSLLALTSACYFQNCPRGGKRATSDMELRQCLPCGPGGKGRCFGPSICCADELGCFLGTAEALRCQEENYLPSPCQSGQKPCGSGGRCAAAGICCSDESCVAEPECREGFFRLTRAREQSNATQLDGPARELLLRLVQLAGTQESVDSAKPRVY.

Positions 1-23 (MLAMMLNTTLSACFLSLLALTSA) are cleaved as a signal peptide. Cysteine 24 and cysteine 29 are oxidised to a cystine. Glycine 32 bears the Glycine amide mark. Cystine bridges form between cysteine 45–cysteine 89, cysteine 48–cysteine 62, cysteine 56–cysteine 79, cysteine 63–cysteine 69, cysteine 96–cysteine 108, cysteine 102–cysteine 120, and cysteine 109–cysteine 114. Residue asparagine 135 is glycosylated (N-linked (GlcNAc...) asparagine).

This sequence belongs to the vasopressin/oxytocin family. As to quaternary structure, interacts with vasopressin receptors V1bR/AVPR1B (Ki=85 pM), V1aR/AVPR1A (Ki=0.6 nM) and V2R/AVPR2 (Ki=4.9 nM). Interacts with oxytocin receptor (OXTR) (Ki=110 nM).

It is found in the secreted. Neurophysin 2 specifically binds vasopressin. Functionally, vasopressin has a direct antidiuretic action on the kidney, it also causes vasoconstriction of the peripheral vessels. Acts by binding to vasopressin receptors (V1bR/AVPR1B, V1aR/AVPR1A, and V2R/AVPR2). The chain is Vasopressin-neurophysin 2-copeptin (Avp) from Rattus norvegicus (Rat).